The sequence spans 233 residues: Small ribosomal subunit protein uS3 (233 aa).

A KH type-2 domain is found at 39 to 107 (IRAFLKRKLY…DVNINIKEER (69 aa)). Residues 212–222 (MQPEKTEESAP) are compositionally biased toward basic and acidic residues. The tract at residues 212–233 (MQPEKTEESAPAKKPRRTRRGK) is disordered. Residues 224-233 (KKPRRTRRGK) show a composition bias toward basic residues.

It belongs to the universal ribosomal protein uS3 family. In terms of assembly, part of the 30S ribosomal subunit. Forms a tight complex with proteins S10 and S14.

Its function is as follows. Binds the lower part of the 30S subunit head. Binds mRNA in the 70S ribosome, positioning it for translation. The polypeptide is Small ribosomal subunit protein uS3 (Campylobacter jejuni subsp. jejuni serotype O:6 (strain 81116 / NCTC 11828)).